The primary structure comprises 354 residues: Guanine nucleotide-binding protein alpha-3 subunit (354 aa).

G2 carries N-myristoyl glycine lipidation. C4 carries S-palmitoyl cysteine lipidation. A G-alpha domain is found at 33–354; that stretch reads KECKILLLGS…TNALKDSGIL (322 aa). The tract at residues 36–49 is G1 motif; the sequence is KILLLGSGESGKST. Residues 41–48, 177–183, 202–206, 271–274, and A326 each bind GTP; these read GSGESGKS, LRARSKT, DVGGQ, and NKID. Residues S48 and T183 each contribute to the Mg(2+) site. Residues 175 to 183 are G2 motif; the sequence is DVLRARSKT. A G3 motif region spans residues 198–207; sequence IHLFDVGGQR. A G4 motif region spans residues 267–274; the sequence is ILFLNKID. The tract at residues 324–329 is G5 motif; the sequence is TQATDT.

It belongs to the G-alpha family. G proteins are composed of 3 units; alpha, beta and gamma. The alpha chain contains the guanine nucleotide binding site.

Functionally, guanine nucleotide-binding proteins (G proteins) are involved as modulators or transducers in various transmembrane signaling systems. This subunit is involved in cAMP regulation and morphogenesis. It is essential for dimorphic switching in haploid cells. The protein is Guanine nucleotide-binding protein alpha-3 subunit (FIL1) of Ustilago hordei (Barley covered smut fungus).